The sequence spans 204 residues: Holliday junction branch migration complex subunit RuvA (204 aa).

The interval 1-64 (MIGRLQGILL…EDAHLLFGFA (64 aa)) is domain I. Positions 65–143 (QKTDRTLFRE…GVKQSDFFVE (79 aa)) are domain II. The flexible linker stretch occupies residues 144-155 (STHIPLSPSIES). The segment at 156-204 (HSESSSDEAISALIALGYKPVEAEKMVKRVAKPELTSEQVIREALKVAL) is domain III.

The protein belongs to the RuvA family. As to quaternary structure, homotetramer. Forms an RuvA(8)-RuvB(12)-Holliday junction (HJ) complex. HJ DNA is sandwiched between 2 RuvA tetramers; dsDNA enters through RuvA and exits via RuvB. An RuvB hexamer assembles on each DNA strand where it exits the tetramer. Each RuvB hexamer is contacted by two RuvA subunits (via domain III) on 2 adjacent RuvB subunits; this complex drives branch migration. In the full resolvosome a probable DNA-RuvA(4)-RuvB(12)-RuvC(2) complex forms which resolves the HJ.

It localises to the cytoplasm. Functionally, the RuvA-RuvB-RuvC complex processes Holliday junction (HJ) DNA during genetic recombination and DNA repair, while the RuvA-RuvB complex plays an important role in the rescue of blocked DNA replication forks via replication fork reversal (RFR). RuvA specifically binds to HJ cruciform DNA, conferring on it an open structure. The RuvB hexamer acts as an ATP-dependent pump, pulling dsDNA into and through the RuvAB complex. HJ branch migration allows RuvC to scan DNA until it finds its consensus sequence, where it cleaves and resolves the cruciform DNA. This is Holliday junction branch migration complex subunit RuvA from Haemophilus influenzae (strain ATCC 51907 / DSM 11121 / KW20 / Rd).